The following is an 86-amino-acid chain: Neurotoxin homolog NL1 (86 aa).

The N-terminal stretch at 1–21 (MKTLLLTLVVVTMVCMDLGYT) is a signal peptide. 4 disulfide bridges follow: Cys-24–Cys-45, Cys-38–Cys-62, Cys-66–Cys-78, and Cys-79–Cys-84.

It belongs to the three-finger toxin family. Short-chain subfamily. Orphan group VIII (haditoxin) sub-subfamily. As to quaternary structure, homodimer; non-covalently linked. As to expression, expressed by the venom gland.

Its subcellular location is the secreted. Functionally, antagonist of muscle and neuronal nicotinic acetylcholine receptors (nAChR) with highest affinity for neuronal alpha-7/CHRNA7 nAChRs. This Naja atra (Chinese cobra) protein is Neurotoxin homolog NL1.